The chain runs to 98 residues: MTSAFLNLTMAFTLSLLGTFMFRSHLMSTLLCLEGMMLSLFVMTSTSTLNSNSMISMTIPITILVFAACEAAVGLALLVKISNTYGTDYVQNLNLLQC.

A run of 3 helical transmembrane segments spans residues 2 to 22 (TSAF…TFMF), 26 to 46 (LMST…MTST), and 59 to 79 (IPIT…ALLV).

It belongs to the complex I subunit 4L family. As to quaternary structure, core subunit of respiratory chain NADH dehydrogenase (Complex I) which is composed of 45 different subunits.

The protein resides in the mitochondrion inner membrane. The enzyme catalyses a ubiquinone + NADH + 5 H(+)(in) = a ubiquinol + NAD(+) + 4 H(+)(out). Core subunit of the mitochondrial membrane respiratory chain NADH dehydrogenase (Complex I) which catalyzes electron transfer from NADH through the respiratory chain, using ubiquinone as an electron acceptor. Part of the enzyme membrane arm which is embedded in the lipid bilayer and involved in proton translocation. The protein is NADH-ubiquinone oxidoreductase chain 4L of Rattus norvegicus (Rat).